The following is a 256-amino-acid chain: Sugar fermentation stimulation protein homolog (256 aa).

The span at 128 to 141 (TGSTDTSFSGTPPT) shows a compositional bias: low complexity. The segment at 128-149 (TGSTDTSFSGTPPTNTEPANTK) is disordered.

Belongs to the SfsA family.

This Shewanella sediminis (strain HAW-EB3) protein is Sugar fermentation stimulation protein homolog.